Reading from the N-terminus, the 189-residue chain is Alanine and glycine-rich protein (189 aa).

The span at 127-160 (AGAGGGSGGGGGGGSGSGGSGGSGGSGGSGGNDG) shows a compositional bias: gly residues. Residues 127–170 (AGAGGGSGGGGGGGSGSGGSGGSGGSGGSGGNDGNDGNDGSSSR) form a disordered region.

Component of the organic matrix of calcified shell layers like nacre and prisms.

Its subcellular location is the secreted. The chain is Alanine and glycine-rich protein from Mytilus californianus (California mussel).